Here is a 429-residue protein sequence, read N- to C-terminus: Uracil permease (429 aa).

Residues 1–13 are Cytoplasmic-facing; sequence MTRRAIGVSERPP. The chain crosses the membrane as a helical span at residues 14–37; sequence LLQTIPLSLQHLFAMFGATVLVPV. Over 38 to 41 the chain is Periplasmic; the sequence is LFHI. A helical transmembrane segment spans residues 42–61; sequence NPATVLLFNGIGTLLYLFIC. Residues 62–64 are Cytoplasmic-facing; it reads KGK. The discontinuously helical transmembrane segment at 65–81 threads the bilayer; the sequence is IPAYLGSSFAFISPVLL. Uracil is bound at residue phenylalanine 73. The Periplasmic portion of the chain corresponds to 82–89; that stretch reads LLPLGYEV. A helical membrane pass occupies residues 90–110; sequence ALGGFIMCGVLFCLVSFIVKK. At 111–122 the chain is on the cytoplasmic side; the sequence is AGTGWLDVLFPP. The chain crosses the membrane as a helical span at residues 123–144; the sequence is AAMGAIVAVIGLELAGVAAGMA. At 145-155 the chain is on the periplasmic side; that stretch reads GLLPAEGQTPD. Residues 156–171 form a helical membrane-spanning segment; the sequence is SKTIIISITTLAVTVL. The Cytoplasmic portion of the chain corresponds to 172–178; the sequence is GSVLFRG. The chain crosses the membrane as a helical span at residues 179–199; that stretch reads FLAIIPILIGVLVGYALSFAM. The Periplasmic segment spans residues 200–224; the sequence is GIVDTTPIINAHWFALPTLYTPRFE. Residues 225–248 traverse the membrane as a helical segment; sequence WFAILTILPAALVVIAEHVGHLVV. Glutamate 241 contributes to the uracil binding site. Topologically, residues 249–261 are cytoplasmic; that stretch reads TANIVKKDLLRDP. A helical transmembrane segment spans residues 262-281; sequence GLHRSMFANGLSTVISGFFG. Residues 282–298 traverse the membrane as a discontinuously helical segment; the sequence is STPNTTYGENIGVMAIT. Residues glycine 289 and glutamate 290 each coordinate uracil. At 299 to 301 the chain is on the cytoplasmic side; sequence RVY. A helical transmembrane segment spans residues 302 to 319; it reads STWVIGGAAIFAILLSCV. Over 320-332 the chain is Periplasmic; sequence GKLAAAIQMIPLP. Residues 333–354 traverse the membrane as a helical segment; the sequence is VMGGVSLLLYGVIGASGIRVLI. Residues 355–365 lie on the Cytoplasmic side of the membrane; it reads ESKVDYNKAQN. The discontinuously helical intramembrane region spans 366-401; that stretch reads LILTSVILIIGVSGAKVNIGAAELKGMALATIVGIG. The Cytoplasmic segment spans residues 402 to 429; sequence LSLIFKLISVLRPEEVVLDAEDADITDK.

The protein belongs to the nucleobase:cation symporter-2 (NCS2) (TC 2.A.40) family.

It is found in the cell inner membrane. The enzyme catalyses uracil(in) + H(+)(in) = uracil(out) + H(+)(out). Its function is as follows. Transport of uracil in the cell. The polypeptide is Uracil permease (uraA) (Escherichia coli O157:H7).